Consider the following 347-residue polypeptide: Phenylalanine--tRNA ligase alpha subunit (347 aa).

Mg(2+) is bound at residue glutamate 265.

The protein belongs to the class-II aminoacyl-tRNA synthetase family. Phe-tRNA synthetase alpha subunit type 1 subfamily. In terms of assembly, tetramer of two alpha and two beta subunits. Mg(2+) is required as a cofactor.

It localises to the cytoplasm. It catalyses the reaction tRNA(Phe) + L-phenylalanine + ATP = L-phenylalanyl-tRNA(Phe) + AMP + diphosphate + H(+). The polypeptide is Phenylalanine--tRNA ligase alpha subunit (Mycolicibacterium gilvum (strain PYR-GCK) (Mycobacterium gilvum (strain PYR-GCK))).